The following is a 101-amino-acid chain: Small ribosomal subunit protein uS14 (101 aa).

Belongs to the universal ribosomal protein uS14 family. In terms of assembly, part of the 30S ribosomal subunit. Contacts proteins S3 and S10.

In terms of biological role, binds 16S rRNA, required for the assembly of 30S particles and may also be responsible for determining the conformation of the 16S rRNA at the A site. The protein is Small ribosomal subunit protein uS14 of Francisella tularensis subsp. novicida (strain U112).